The primary structure comprises 253 residues: 1-(5-phosphoribosyl)-5-[(5-phosphoribosylamino)methylideneamino] imidazole-4-carboxamide isomerase (253 aa).

Aspartate 8 serves as the catalytic Proton acceptor. Aspartate 131 serves as the catalytic Proton donor.

Belongs to the HisA/HisF family.

Its subcellular location is the cytoplasm. It catalyses the reaction 1-(5-phospho-beta-D-ribosyl)-5-[(5-phospho-beta-D-ribosylamino)methylideneamino]imidazole-4-carboxamide = 5-[(5-phospho-1-deoxy-D-ribulos-1-ylimino)methylamino]-1-(5-phospho-beta-D-ribosyl)imidazole-4-carboxamide. The protein operates within amino-acid biosynthesis; L-histidine biosynthesis; L-histidine from 5-phospho-alpha-D-ribose 1-diphosphate: step 4/9. The polypeptide is 1-(5-phosphoribosyl)-5-[(5-phosphoribosylamino)methylideneamino] imidazole-4-carboxamide isomerase (Polynucleobacter necessarius subsp. necessarius (strain STIR1)).